Reading from the N-terminus, the 167-residue chain is Photosystem II extrinsic protein V (167 aa).

The signal sequence occupies residues 1–30 (MVFKTLRRTLWLTLAALLAVFQFNLGAAQA). Positions 67, 70, 71, and 122 each coordinate heme c.

This sequence belongs to the cytochrome c family. PsbV subfamily. PSII is composed of 1 copy each of membrane proteins PsbA, PsbB, PsbC, PsbD, PsbE, PsbF, PsbH, PsbI, PsbJ, PsbK, PsbL, PsbM, PsbT, PsbX, PsbY, PsbZ, Psb30/Ycf12, peripheral proteins PsbO, CyanoQ (PsbQ), PsbU, PsbV and a large number of cofactors. It forms dimeric complexes. Heme c is required as a cofactor.

It localises to the cellular thylakoid membrane. Its function is as follows. One of the extrinsic, lumenal subunits of photosystem II (PSII). PSII is a light-driven water plastoquinone oxidoreductase, using light energy to abstract electrons from H(2)O, generating a proton gradient subsequently used for ATP formation. The extrinsic proteins stabilize the structure of photosystem II oxygen-evolving complex (OEC), the ion environment of oxygen evolution and protect the OEC against heat-induced inactivation. Low-potential cytochrome c that plays a role in the OEC of PSII. This chain is Photosystem II extrinsic protein V, found in Synechococcus elongatus (strain ATCC 33912 / PCC 7942 / FACHB-805) (Anacystis nidulans R2).